A 215-amino-acid chain; its full sequence is Oligoribonuclease (215 aa).

The 166-residue stretch at 5–170 (LVWIDCEMTG…ADIHESIREL (166 aa)) folds into the Exonuclease domain. Residue Y127 is part of the active site.

Belongs to the oligoribonuclease family.

The protein resides in the cytoplasm. Functionally, 3'-to-5' exoribonuclease specific for small oligoribonucleotides. The chain is Oligoribonuclease from Mycobacterium leprae (strain TN).